Consider the following 394-residue polypeptide: Phloroisovalerophenone synthase (394 aa).

The active site involves cysteine 166.

The protein belongs to the thiolase-like superfamily. Chalcone/stilbene synthases family. In terms of assembly, homodimer. Expressed in lupulin gland. Present at low levels in leaves but accumulates in cones.

It carries out the reaction 3-methylbutanoyl-CoA + 3 malonyl-CoA + 3 H(+) = phlorisovalerophenone + 3 CO2 + 4 CoA. The catalysed reaction is (E)-4-coumaroyl-CoA + 3 malonyl-CoA + 3 H(+) = 2',4,4',6'-tetrahydroxychalcone + 3 CO2 + 4 CoA. The enzyme catalyses 2-methylpropanoyl-CoA + 3 malonyl-CoA + 3 H(+) = phlorisobutanophenone + 3 CO2 + 4 CoA. It participates in secondary metabolite biosynthesis. Functionally, involved in the biosynthesis of prenylated phenolics natural products which contribute to the bitter taste of beer and display broad biological activities. Polyketide synthase that can use 3-methylbutanoyl-CoA (isovaleryl-CoA) and 2-methylpropanoyl-CoA (isobutyryl-CoA) as substrates to produce phlorisovalerophenone (PIVP) and phlorisobutyrophenone (2-methyl-1-(2,4,6-trihydroxyphenyl)propan-1-one), respectively, intermediates in the biosynthesis of the bitter acids (alpha and beta) acids. Can also produce naringenin-chalcone (2',4,4',6'-tetrahydroxychalcone) from 4-coumaroyl-CoA with a lower efficiency. The sequence is that of Phloroisovalerophenone synthase from Humulus lupulus (European hop).